Here is a 69-residue protein sequence, read N- to C-terminus: Conotoxin SIVA (69 aa).

The signal sequence occupies residues 1-21 (MGMRMMFTVFLLVVLATTVVS). Residues 22-38 (TPSDRASDGRNAAVHER) constitute a propeptide that is removed on maturation. The residue at position 39 (Gln-39) is a Pyrrolidone carboxylic acid. Ser-45 carries an O-linked (HexNAc...) serine glycan. 4-hydroxyproline occurs at positions 55, 60, and 61. A Cysteine amide modification is found at Cys-68.

It belongs to the conotoxin A superfamily. In terms of processing, contains 3 disulfide bonds. Post-translationally, O-linked glycan consists of Hex3-HexNAc2 pentasaccharide. As to expression, expressed by the venom duct.

The protein localises to the secreted. Neurotoxin with probable activity on sodium channel. Induces intense repetitive firing of the frog neuromuscular junction, leading to a tetanic contracture in muscle fiber (spastic paralysis). In vivo, shows the same effect as the whole venom when injected on fish. Intraperitoneal injection into fish induces a period of rapid swimming followed by a spastic paralysis with stiff fibrillating fins. At high doses, the peptide is lethal to both fish and mice. The polypeptide is Conotoxin SIVA (Conus striatus (Striated cone)).